Consider the following 1555-residue polypeptide: Glycogen debranching enzyme (1555 aa).

Ser87 carries the post-translational modification Phosphoserine. Residues Asp549, His552, and Asp650 contribute to the active site.

Belongs to the glycogen debranching enzyme family. As to quaternary structure, monomer. Interacts with NHLRC1/malin. Post-translationally, the N-terminus is blocked. Ubiquitinated.

Its subcellular location is the cytoplasm. It catalyses the reaction Transfers a segment of a (1-&gt;4)-alpha-D-glucan to a new position in an acceptor, which may be glucose or a (1-&gt;4)-alpha-D-glucan.. The catalysed reaction is Hydrolysis of (1-&gt;6)-alpha-D-glucosidic branch linkages in glycogen phosphorylase limit dextrin.. Multifunctional enzyme acting as 1,4-alpha-D-glucan:1,4-alpha-D-glucan 4-alpha-D-glycosyltransferase and amylo-1,6-glucosidase in glycogen degradation. The chain is Glycogen debranching enzyme (AGL) from Oryctolagus cuniculus (Rabbit).